The primary structure comprises 465 residues: UDP-N-acetylmuramate--L-alanine ligase (465 aa).

115 to 121 contributes to the ATP binding site; that stretch reads GAHGKTT.

Belongs to the MurCDEF family.

The protein resides in the cytoplasm. It carries out the reaction UDP-N-acetyl-alpha-D-muramate + L-alanine + ATP = UDP-N-acetyl-alpha-D-muramoyl-L-alanine + ADP + phosphate + H(+). The protein operates within cell wall biogenesis; peptidoglycan biosynthesis. Cell wall formation. The polypeptide is UDP-N-acetylmuramate--L-alanine ligase (Coxiella burnetii (strain Dugway 5J108-111)).